We begin with the raw amino-acid sequence, 628 residues long: U-box domain-containing protein 10 (628 aa).

Residues 242 to 316 (TIPEDFLCPI…SQWCTKHNIE (75 aa)) form the U-box domain. ARM repeat units follow at residues 373–413 (TDNR…NLSI), 415–454 (EHNK…SLSL), 456–495 (DENK…NLCI), 497–537 (QGNK…VLAS), and 539–578 (QVAK…CLCK).

It carries out the reaction S-ubiquitinyl-[E2 ubiquitin-conjugating enzyme]-L-cysteine + [acceptor protein]-L-lysine = [E2 ubiquitin-conjugating enzyme]-L-cysteine + N(6)-ubiquitinyl-[acceptor protein]-L-lysine.. The protein operates within protein modification; protein ubiquitination. Its function is as follows. Functions as an E3 ubiquitin ligase. In Arabidopsis thaliana (Mouse-ear cress), this protein is U-box domain-containing protein 10 (PUB10).